A 430-amino-acid chain; its full sequence is Adenylosuccinate synthetase (430 aa).

GTP-binding positions include 13–19 (GDEGKGK) and 41–43 (GHT). Asp14 functions as the Proton acceptor in the catalytic mechanism. Asp14 and Gly41 together coordinate Mg(2+). Residues 14 to 17 (DEGK), 39 to 42 (NAGH), Thr130, Arg144, Gln225, Thr240, and Arg304 each bind IMP. His42 serves as the catalytic Proton donor. 300-306 (ATTGRAR) is a binding site for substrate. GTP is bound by residues Arg306, 332–334 (KLD), and 414–416 (STG).

Belongs to the adenylosuccinate synthetase family. Homodimer. The cofactor is Mg(2+).

It localises to the cytoplasm. The enzyme catalyses IMP + L-aspartate + GTP = N(6)-(1,2-dicarboxyethyl)-AMP + GDP + phosphate + 2 H(+). The protein operates within purine metabolism; AMP biosynthesis via de novo pathway; AMP from IMP: step 1/2. In terms of biological role, plays an important role in the de novo pathway of purine nucleotide biosynthesis. Catalyzes the first committed step in the biosynthesis of AMP from IMP. This is Adenylosuccinate synthetase from Pseudomonas fluorescens (strain ATCC BAA-477 / NRRL B-23932 / Pf-5).